The following is a 258-amino-acid chain: UBX domain-containing protein 2A (258 aa).

The required for interaction with CHRNA3 stretch occupies residues 1–152; the sequence is MKEVDNLDSI…SATPRIVSKA (152 aa). Residues 1 to 165 are required for inhibition of CHRNA3 ubiquitination and translocation of CHRNA3 to the plasma membrane resulting in an increase in acetylcholine-gated nicotinic acetylcholine receptor currents; it reads MKEVDNLDSI…EVDNKSTLSA (165 aa). The 65-residue stretch at 61-125 folds into the SEP domain; sequence QVDVNIKLWK…VEDKKNEVCM (65 aa). Residues 168 to 258 form a required for interaction with VCP region; it reads LNNLEPITRI…QKTAEPFRKL (91 aa). One can recognise a UBX domain in the interval 170–247; it reads NLEPITRIQI…DLQNAVIIQR (78 aa).

As to quaternary structure, part of a complex composed of STUB1/CHIP, VCP/p97, CHRNA3, and UBXN2A that modulates the ubiquitination and endoplasmic reticulum-associated degradation (ERAD) of CHRNA3. Within the complex UBXN2A acts as a scaffold protein required for the interaction of CHRNA3 with VCP/p97, this interaction also inhibits CHRNA3 ubiquitination by STUB1/CHIP and subsequently ERAD. Interacts (via SEP domain) with CHRNA3 and interacts (via UBX domain) with VCP/P97; these interactions are required for the interaction of CHRNA3 with the STUB1-VCP-UBXN2A complex. Interacts with HSPA9/MOT-2 (via SBD domain); the interaction inhibits HSPA9/MOT-2 interaction with and degradation of p53, thereby promotes p53 translocation to the nucleus. Interacts with RICTOR. Ubiquitinated.

The protein resides in the golgi apparatus. It localises to the endoplasmic reticulum. Its subcellular location is the perikaryon. It is found in the cell projection. The protein localises to the dendrite. The protein resides in the nucleus. It localises to the cytoplasm. Its function is as follows. Acts to repress the ubiquitination and subsequent endoplasmic reticulum-associated degradation of CHRNA3 by the STUB1-VCP-UBXN2A complex in cortical neurons. Also acts to promote the translocation of CHRNA3 to the plasma membrane and subsequently increases plasma membrane acetylcholine-gated ion-channel activation. Plays a role in the inhibition of STUB1-mediated TP53 degradation, via its interaction with HSPA9 which acts to inhibit TP53 binding to HSPA9. Positively mediates the ubiquitination and proteosomal degradation of RICTOR, may thereby act as a negative regulator of the mTORC2 pathway. The polypeptide is UBX domain-containing protein 2A (Rattus norvegicus (Rat)).